The following is a 244-amino-acid chain: Methylthioribulose-1-phosphate dehydratase (244 aa).

A substrate-binding site is contributed by C89. Positions 107 and 109 each coordinate Zn(2+). E130 functions as the Proton donor/acceptor in the catalytic mechanism. H192 contacts Zn(2+).

It belongs to the aldolase class II family. MtnB subfamily. Zn(2+) serves as cofactor.

It localises to the cytoplasm. The catalysed reaction is 5-(methylsulfanyl)-D-ribulose 1-phosphate = 5-methylsulfanyl-2,3-dioxopentyl phosphate + H2O. It participates in amino-acid biosynthesis; L-methionine biosynthesis via salvage pathway; L-methionine from S-methyl-5-thio-alpha-D-ribose 1-phosphate: step 2/6. Functionally, catalyzes the dehydration of methylthioribulose-1-phosphate (MTRu-1-P) into 2,3-diketo-5-methylthiopentyl-1-phosphate (DK-MTP-1-P). This is Methylthioribulose-1-phosphate dehydratase from Saccharomyces cerevisiae (strain ATCC 204508 / S288c) (Baker's yeast).